The primary structure comprises 790 residues: MKAHPKEMVPLMGKRVAAPSGNPAILPEKRPAEITPTKKSAHFFLEIEGFEPNPTVAKTSPPVFSKPMDSNIRQCISGNCDDMDSPQSPQDDVTETPSNPNSPSAQLAKEEQRRKKRRLKKRIFAAVSEGCVEELVELLVELQELCRRRHDEDVPDFLMHKLTASDTGKTCLMKALLNINPNTKEIVRILLAFAEENDILGRFINAEYTEEAYEGQTALNIAIERRQGDIAALLIAAGADVNAHAKGAFFNPKYQHEGFYFGETPLALAACTNQPEIVQLLMEHEQTDITSRDSRGNNILHALVTVAEDFKTQNDFVKRMYDMILLRSGNWELETTRNNDGLTPLQLAAKMGKAEILKYILSREIKEKRLRSLSRKFTDWAYGPVSSSLYDLTNVDTTTDNSVLEITVYNTNIDNRHEMLTLEPLHTLLHMKWKKFAKHMFFLSFCFYFFYNITLTLVSYYRPREEEAIPHPLALTHKMGWLQLLGRMFVLIWAMCISVKEGIAIFLLRPSDLQSILSDAWFHFVFFIQAVLVILSVFLYLFAYKEYLACLVLAMALGWANMLYYTRGFQSMGMYSVMIQKVILHDVLKFLFVYIVFLLGFGVALASLIEKCPKDNKDCSSYGSFSDAVLELFKLTIGLGDLNIQQNSKYPILFLFLLITYVILTFVLLLNMLIALMGETVENVSKESERIWRLQRARTILEFEKMLPEWLRSRFRMGELCKVAEDDFRLCLRINEVKWTEWKTHVSFLNEDPGPVRRTDFNKIQDSSRNNSKTTLNAFEEVEEFPETSV.

Residues 1 to 430 (MKAHPKEMVP…TLEPLHTLLH (430 aa)) lie on the Cytoplasmic side of the membrane. 3 disordered regions span residues 15 to 34 (RVAA…PAEI), 52 to 71 (PNPT…MDSN), and 76 to 112 (ISGN…KEEQ). Residues 95–105 (ETPSNPNSPSA) are compositionally biased toward polar residues. ANK repeat units follow at residues 117 to 148 (RRLK…LCRR), 170 to 198 (TCLM…EEND), 214 to 243 (EGQT…DVNA), 261 to 291 (FGET…DITS), 298 to 330 (NILH…RSGN), 340 to 362 (DGLT…YILS), and 398 to 420 (TTDN…HEML). Residues 431–460 (MKWKKFAKHMFFLSFCFYFFYNITLTLVSY) traverse the membrane as a helical segment. The Extracellular portion of the chain corresponds to 461–479 (YRPREEEAIPHPLALTHKM). Residues 480–508 (GWLQLLGRMFVLIWAMCISVKEGIAIFLL) form a helical membrane-spanning segment. At 509–519 (RPSDLQSILSD) the chain is on the cytoplasmic side. The helical transmembrane segment at 520–540 (AWFHFVFFIQAVLVILSVFLY) threads the bilayer. Residues 541 to 545 (LFAYK) lie on the Extracellular side of the membrane. The helical transmembrane segment at 546-566 (EYLACLVLAMALGWANMLYYT) threads the bilayer. Residues 567–569 (RGF) lie on the Cytoplasmic side of the membrane. Residues 570 to 608 (QSMGMYSVMIQKVILHDVLKFLFVYIVFLLGFGVALASL) traverse the membrane as a helical segment. At 609–620 (IEKCPKDNKDCS) the chain is on the extracellular side. Positions 621–646 (SYGSFSDAVLELFKLTIGLGDLNIQQ) form an intramembrane region, pore-forming. G638 contributes to the Na(+) binding site. The Extracellular portion of the chain corresponds to 647–649 (NSK). A helical membrane pass occupies residues 650–686 (YPILFLFLLITYVILTFVLLLNMLIALMGETVENVSK). Residues 687-790 (ESERIWRLQR…EVEEFPETSV (104 aa)) lie on the Cytoplasmic side of the membrane.

Belongs to the transient receptor (TC 1.A.4) family. TrpV subfamily. TRPV3 sub-subfamily. In terms of assembly, homotetramer. May convert from a homotetramer to a homopentamer to allow pore dilation. Interacts with TRPV1; may form a heteromeric channel with TRPV1. Interacts with SNX11; this interaction promotes TRPV3 trafficking from the cell membrane to lysosome for degradation. Abundantly expressed in CNS. Widely expressed at low levels. Detected in dorsal root ganglion (at protein level). Expressed in the keratinocyte layers of the outer root sheath and, to lesser extent, to the matrix of the hair follicles (at protein level).

It localises to the cell membrane. The protein localises to the cytoplasm. Its subcellular location is the lysosome. The enzyme catalyses Ca(2+)(in) = Ca(2+)(out). It catalyses the reaction Mg(2+)(in) = Mg(2+)(out). The catalysed reaction is Na(+)(in) = Na(+)(out). It carries out the reaction K(+)(in) = K(+)(out). With respect to regulation, activated by cannabinoid that binds to the vanilloid binding pocket. Diphenylboronic anhydride induces pore dilation and enhances cation permeability by promoting the conversion to a homopentamer. Non-selective calcium permeant cation channel. It is activated by innocuous (warm) temperatures and shows an increased response at noxious temperatures greater than 39 degrees Celsius. Activation exhibits an outward rectification. The channel pore can dilate to provide permeability to larger cations. May associate with TRPV1 and may modulate its activity. Is a negative regulator of hair growth and cycling: TRPV3-coupled signaling suppresses keratinocyte proliferation in hair follicles and induces apoptosis and premature hair follicle regression (catagen). This chain is Transient receptor potential cation channel subfamily V member 3 (TRPV3), found in Homo sapiens (Human).